Reading from the N-terminus, the 399-residue chain is MTENKPSEQTNELKDLVVEKEFNQTLDDLLANPFGSDGESAASIVNNETDAAPRLVDMLTETNKKQALELSKQIEPGNQAAILGYGAPAQAKLHDFSHSMLAHVQKQDVGPIGDIISDLMYRLQEADPDELAARNKNVFTKMFHRVKQSINEITSKYQKIGTQIDRIALKLEHSKKRLMEDNSFLEQLYDKNKDYFQALNIYIAAGELKLEEINTKMLPELRKKAEQTGDQMDYQEVNDLTQFADRLDKRVYDLRLSRQITIQQAPQIRLIQNTNQALAEKIQSSIMTAIPLWKNQVAIALTLLRQQQAVAAQRQVSETTNELLKRNADMLKTNAIETARENERGIVDIETLKETQSSLIETLQETLKIQQEGRAKRAVAEKELVTMEQELKERLLEMK.

The protein belongs to the TelA family.

This is an uncharacterized protein from Listeria monocytogenes serovar 1/2a (strain ATCC BAA-679 / EGD-e).